Reading from the N-terminus, the 396-residue chain is Elongation factor Tu (396 aa).

One can recognise a tr-type G domain in the interval 10 to 205 (KPHVNIGTIG…AVDESIPAPV (196 aa)). A G1 region spans residues 19-26 (GHVDHGKT). Residue 19 to 26 (GHVDHGKT) participates in GTP binding. Threonine 26 is a Mg(2+) binding site. Residues 62–66 (GITIN) form a G2 region. Residues 83–86 (DAPG) form a G3 region. GTP contacts are provided by residues 83-87 (DAPGH) and 138-141 (NKSD). Residues 138–141 (NKSD) are G4. Residues 175 to 177 (SAL) form a G5 region.

This sequence belongs to the TRAFAC class translation factor GTPase superfamily. Classic translation factor GTPase family. EF-Tu/EF-1A subfamily. In terms of assembly, monomer.

It localises to the cytoplasm. The enzyme catalyses GTP + H2O = GDP + phosphate + H(+). In terms of biological role, GTP hydrolase that promotes the GTP-dependent binding of aminoacyl-tRNA to the A-site of ribosomes during protein biosynthesis. This is Elongation factor Tu from Mycobacterium leprae (strain Br4923).